Consider the following 457-residue polypeptide: Argininosuccinate lyase (457 aa).

The protein belongs to the lyase 1 family. Argininosuccinate lyase subfamily.

It localises to the cytoplasm. It catalyses the reaction 2-(N(omega)-L-arginino)succinate = fumarate + L-arginine. Its pathway is amino-acid biosynthesis; L-arginine biosynthesis; L-arginine from L-ornithine and carbamoyl phosphate: step 3/3. This is Argininosuccinate lyase from Yersinia pseudotuberculosis serotype O:3 (strain YPIII).